We begin with the raw amino-acid sequence, 576 residues long: MSLIGGGSDCAAGSNPLAQFTKHTQHDTSLQQSMRNGEFQQGNQRMMRNESTMSPMERQQMDQFMQQQNNPAFNFQPMQHELNVMQQNMNAPQQVANNSWNQEFRMKDPMVANAPSAQVQTPVQSTNWAQDFQQAGPEVQHHAQQHQHPILSVPGVRAGIYGGGRLMGGSMMNRAAQMQQQNPAQAQTSEQSQTQWEDQFKDIESMLNSKTQEPKTKQQEQNTFEQVWDDIQVSYADVELTNDQFQAQWEKDFAQYAEGRLNYGEYKYEEKNQFRNDPDAYEIGMRLMESGAKLSEAGLAFEAAVQQDPKHVDAWLKLGEVQTQNEKESDGIAALEKCLELDPTNLAALMTLAISYINDGYDNAAYATLERWIETKYPDIASRARSSNPDLDGGDRIEQNKRVTELFMKAAQLSPDVASMDADVQTGLGVLFYSMEEFDKTIDCFKAAIEVEPDKALNWNRLGAALANYNKPEEAVEAYSRALQLNPNFVRARYNLGVSFINMGRYKEAVEHLLTGISLHEVEGVDASEMSSNQGLQNNALVETLKRAFLGMNRRDLVDKVYPGMGLAQFRKMFDF.

A Glycyl cysteine thioester (Cys-Gly) (interchain with G-Cter in ubiquitin) cross-link involves residue Cys-10. Positions 11–33 (AAGSNPLAQFTKHTQHDTSLQQS) are amphipathic helix 1 (AH1). Lys-22 participates in a covalent cross-link: Glycyl lysine isopeptide (Lys-Gly) (interchain with G-Cter in ubiquitin). Residues 58-75 (RQQMDQFMQQQNNPAFNF) form an amphipathic helix 2 (AH2) region. 2 short sequence motifs (wxxxF/Y motif) span residues 100-104 (WNQEF) and 128-132 (WAQDF). The disordered stretch occupies residues 176–195 (AQMQQQNPAQAQTSEQSQTQ). The short motif at 196–200 (WEDQF) is the WxxxF/Y motif 3 element. The segment at 224–240 (FEQVWDDIQVSYADVEL) is amphipathic helix 4 (AH4). The WxxxF/Y motif 4 motif lies at 249–253 (WEKDF). TPR repeat units lie at residues 278 to 311 (PDAY…DPKH), 312 to 345 (VDAW…DPTN), 346 to 383 (LAAL…IASR), 384 to 421 (ARSS…ASMD), 422 to 455 (ADVQ…EPDK), 456 to 489 (ALNW…NPNF), and 490 to 523 (VRAR…HEVE).

It belongs to the peroxisomal targeting signal receptor family. In terms of assembly, interacts (via WxxxF/Y and LVxEF motifs) with PEX14; promoting translocation through the PEX13-PEX14 docking complex. Interacts with PEX8. Post-translationally, a disulfide bond is created between Cys-10 and Cys-338 or Cys-444. In terms of processing, monoubiquitinated at Cys-10 by PEX2 during PEX5 passage through the retrotranslocation channel: monoubiquitination acts as a signal for PEX5 extraction and is required for proper export from peroxisomes and recycling. When PEX5 recycling is compromised, polyubiquitinated at Lys-22 by PEX10 during its passage through the retrotranslocation channel, leading to its degradation.

It localises to the peroxisome membrane. The protein resides in the cytoplasm. Its subcellular location is the cytosol. The protein localises to the peroxisome matrix. Receptor that mediates peroxisomal import of proteins containing a C-terminal PTS1-type tripeptide peroxisomal targeting signal (SKL-type). Binds to cargo proteins containing a PTS1 peroxisomal targeting signal in the cytosol, and translocates them into the peroxisome matrix by passing through the peroxisomal docking complex along with cargo proteins. PEX5 receptor is then retrotranslocated into the cytosol, leading to release of bound cargo in the peroxisome matrix, and reset for a subsequent peroxisome import cycle. Required for PEX7 ubiquitination. This chain is Peroxisomal targeting signal receptor, found in Komagataella phaffii (strain GS115 / ATCC 20864) (Yeast).